We begin with the raw amino-acid sequence, 39 residues long: Bomanin Short 3 (39 aa).

The first 18 residues, 1 to 18 (MKFLSLAFVLGLLALANA), serve as a signal peptide directing secretion. Positions 19–23 (TPLNP) are excised as a propeptide. Cysteine 32 and cysteine 35 are oxidised to a cystine.

The protein belongs to the bomanin family. Hemolymph (at protein level).

Its subcellular location is the secreted. Its function is as follows. Secreted immune-induced peptide induced by Toll signaling. Has a role in resistance bacterial and fungal infections. The strength of antimicrobial activity appears to correlate with the overall level of expression. Has no activity against the fungus C.glabrata in vitro. The sequence is that of Bomanin Short 3 from Drosophila melanogaster (Fruit fly).